We begin with the raw amino-acid sequence, 88 residues long: SPbeta prophage-derived protein BhlB (88 aa).

2 consecutive transmembrane segments (helical) span residues 15–35 and 45–65; these read LLAI…AFII and DCLY…AAWF.

It belongs to the SPP1 holin family.

Its subcellular location is the cell membrane. Functionally, may be involved in the secretion of the autolysin BlyA. The polypeptide is SPbeta prophage-derived protein BhlB (bhlB) (Bacillus subtilis (strain 168)).